The chain runs to 526 residues: Serine/threonine-protein kinase ppk22 (526 aa).

2 disordered regions span residues 1–24 (MARE…QSHF) and 39–106 (AATV…PRPL). Over residues 10 to 23 (KSPSSTDDGMSQSH) the composition is skewed to polar residues. The segment covering 65–78 (NQLNELDLNDSSDQ) has biased composition (low complexity). Ser-154 carries the phosphoserine modification. Residues 155–445 (FEKIRLLGQG…ASDIKQHPFF (291 aa)) enclose the Protein kinase domain. ATP is bound by residues 161-169 (LGQGDVGKV) and Lys-184. Catalysis depends on Asp-280, which acts as the Proton acceptor. Thr-339 is modified (phosphothreonine). Ser-341 carries the phosphoserine modification. Tyr-348 bears the Phosphotyrosine mark. The AGC-kinase C-terminal domain occupies 446-526 (RHIQWALLRS…SVTLHHAGDE (81 aa)). The interval 499–526 (MHSSTPVNEQSNPFDSFSSVTLHHAGDE) is disordered. A compositionally biased stretch (polar residues) spans 500–519 (HSSTPVNEQSNPFDSFSSVT).

The protein belongs to the protein kinase superfamily. AGC Ser/Thr protein kinase family.

It is found in the cytoplasm. It carries out the reaction L-seryl-[protein] + ATP = O-phospho-L-seryl-[protein] + ADP + H(+). It catalyses the reaction L-threonyl-[protein] + ATP = O-phospho-L-threonyl-[protein] + ADP + H(+). This is Serine/threonine-protein kinase ppk22 (ppk22) from Schizosaccharomyces pombe (strain 972 / ATCC 24843) (Fission yeast).